We begin with the raw amino-acid sequence, 319 residues long: Bidirectional sugar transporter SWEET15 (319 aa).

Topologically, residues 1 to 10 (MAFMSMERST) are extracellular. Residues 11-31 (WAFTFGILGNLISLMVFLSPL) form a helical membrane-spanning segment. Residues 13–99 (FTFGILGNLI…AMYLAYAPKS (87 aa)) enclose the MtN3/slv 1 domain. Residues 32–50 (PTFYRVYRKKSTEGFQSTP) are Cytoplasmic-facing. A helical membrane pass occupies residues 51–71 (YVVTLFSCMLWMYYAFVKSGA). A topological domain (extracellular) is located at residue Glu72. A helical membrane pass occupies residues 73–93 (LLVTINGVGCVIETVYLAMYL). The Cytoplasmic portion of the chain corresponds to 94-106 (AYAPKSARMLTAK). The chain crosses the membrane as a helical span at residues 107-127 (MLLGLNIGLFGVIALVTLLLS). Residues 128–134 (RGELRVH) are Extracellular-facing. Residues 135-155 (VLGWICVAVSLSVFAAPLSII) traverse the membrane as a helical segment. The MtN3/slv 2 domain maps to 135 to 219 (VLGWICVAVS…ALYMAYRSKK (85 aa)). Residues 156 to 167 (RLVIRTKSVEFM) lie on the Cytoplasmic side of the membrane. A helical membrane pass occupies residues 168-188 (PFSLSFFLVLSAVIWFLYGLL). The Extracellular segment spans residues 189–191 (KKD). A helical transmembrane segment spans residues 192-212 (VFVALPNVLGFVFGVAQMALY). Residues 213–319 (MAYRSKKPLV…KPDMAIVVEV (107 aa)) are Cytoplasmic-facing.

It belongs to the SWEET sugar transporter family. As to quaternary structure, forms homooligomers and/or heterooligomers.

The protein resides in the cell membrane. Its function is as follows. Mediates both low-affinity uptake and efflux of sugar across the plasma membrane. In terms of biological role, confers blight susceptibility. Confers TAL effector-mediated susceptibility to Xanthomonas oryzae pv. oryzae. In Oryza sativa subsp. japonica (Rice), this protein is Bidirectional sugar transporter SWEET15 (SWEET15).